A 191-amino-acid chain; its full sequence is 3-isopropylmalate dehydratase small subunit (191 aa).

Belongs to the LeuD family. LeuD type 1 subfamily. In terms of assembly, heterodimer of LeuC and LeuD.

It catalyses the reaction (2R,3S)-3-isopropylmalate = (2S)-2-isopropylmalate. It participates in amino-acid biosynthesis; L-leucine biosynthesis; L-leucine from 3-methyl-2-oxobutanoate: step 2/4. In terms of biological role, catalyzes the isomerization between 2-isopropylmalate and 3-isopropylmalate, via the formation of 2-isopropylmaleate. This is 3-isopropylmalate dehydratase small subunit from Anaeromyxobacter dehalogenans (strain 2CP-C).